The primary structure comprises 250 residues: Small ribosomal subunit protein uS3 (250 aa).

Residues 16–85 (IDEYLEKELE…NPQIEVKEVS (70 aa)) form the KH type-2 domain.

It belongs to the universal ribosomal protein uS3 family. Part of the 30S ribosomal subunit.

Functionally, binds the lower part of the 30S subunit head. The sequence is that of Small ribosomal subunit protein uS3 from Methanobrevibacter smithii (strain ATCC 35061 / DSM 861 / OCM 144 / PS).